Consider the following 188-residue polypeptide: Inosine triphosphate pyrophosphatase (188 aa).

An ITP-binding site is contributed by 11 to 16 (TGNKHK). E39 contributes to the Mg(2+) binding site. Residues K51, 67–68 (DT), K84, 143–146 (FGWN), and 171–172 (HR) contribute to the ITP site.

Belongs to the HAM1 NTPase family. As to quaternary structure, homodimer. Mg(2+) serves as cofactor. It depends on Mn(2+) as a cofactor.

Its subcellular location is the cytoplasm. It localises to the nucleus. It catalyses the reaction ITP + H2O = IMP + diphosphate + H(+). The enzyme catalyses dITP + H2O = dIMP + diphosphate + H(+). The catalysed reaction is XTP + H2O = XMP + diphosphate + H(+). Its function is as follows. Pyrophosphatase that hydrolyzes non-canonical purine nucleotides such as inosine triphosphate (ITP), deoxyinosine triphosphate (dITP) or xanthosine 5'-triphosphate (XTP) to their respective monophosphate derivatives. The enzyme does not distinguish between the deoxy- and ribose forms. Probably excludes non-canonical purines from RNA and DNA precursor pools, thus preventing their incorporation into RNA and DNA and avoiding chromosomal lesions. This Schizosaccharomyces pombe (strain 972 / ATCC 24843) (Fission yeast) protein is Inosine triphosphate pyrophosphatase.